The following is a 357-amino-acid chain: Sorbitol dehydrogenase 2 (357 aa).

C43 is a Zn(2+) binding site. Y49 serves as a coordination point for substrate. Zn(2+)-binding residues include H68 and E69. E154 is a binding site for substrate. Residues D202, K207, 275-277 (VGM), and 299-301 (CFR) contribute to the NAD(+) site. The substrate site is built by R301 and Y302.

It belongs to the zinc-containing alcohol dehydrogenase family. Homotetramer. Zn(2+) is required as a cofactor.

The catalysed reaction is keto-D-fructose + NADH + H(+) = D-sorbitol + NAD(+). The enzyme catalyses xylitol + NAD(+) = D-xylulose + NADH + H(+). In terms of biological role, polyol dehydrogenase that catalyzes the reversible NAD(+)-dependent oxidation of various sugar alcohols. Is active with D-sorbitol (D-glucitol) and xylitol as substrates, leading to the C2-oxidized product D-fructose and D-xylulose, respectively. The sequence is that of Sorbitol dehydrogenase 2 (SOR2) from Saccharomyces cerevisiae (strain ATCC 204508 / S288c) (Baker's yeast).